Here is a 246-residue protein sequence, read N- to C-terminus: ATP synthase subunit a, chloroplastic (246 aa).

The next 5 membrane-spanning stretches (helical) occupy residues 33–53 (VHGQ…GFGL), 99–119 (TIFL…WALI), 133–153 (INTT…AGIN), 201–221 (GVLV…LGLF), and 222–242 (TSAI…GESL).

It belongs to the ATPase A chain family. As to quaternary structure, F-type ATPases have 2 components, CF(1) - the catalytic core - and CF(0) - the membrane proton channel. CF(1) has five subunits: alpha(3), beta(3), gamma(1), delta(1), epsilon(1). CF(0) has four main subunits: a, b, b' and c.

It localises to the plastid. Its subcellular location is the chloroplast thylakoid membrane. Key component of the proton channel; it plays a direct role in the translocation of protons across the membrane. This is ATP synthase subunit a, chloroplastic from Oltmannsiellopsis viridis (Marine flagellate).